The chain runs to 622 residues: Polypeptide N-acetylgalactosaminyltransferase 18 (622 aa).

The Cytoplasmic portion of the chain corresponds to 1–12 (MVCTRKTKTLVS). A helical; Signal-anchor for type II membrane protein transmembrane segment spans residues 13-35 (TCVILSGMTNIICLLYVGWVTNY). Topologically, residues 36–622 (IASVYVRGQE…ITNVLRSLVS (587 aa)) are lumenal. 5 disulfide bridges follow: cysteine 144-cysteine 392, cysteine 383-cysteine 462, cysteine 497-cysteine 513, cysteine 545-cysteine 558, and cysteine 586-cysteine 606. N-linked (GlcNAc...) asparagine glycosylation is present at asparagine 146. The interval 153–267 (LPEVSIVFIF…VGWAEPVLTR (115 aa)) is catalytic subdomain A. Aspartate 194 contacts substrate. Asparagine 195 carries an N-linked (GlcNAc...) asparagine glycan. 2 residues coordinate Mn(2+): aspartate 251 and histidine 253. Asparagine 320 is a glycosylation site (N-linked (GlcNAc...) asparagine). Residues 324–400 (PIRSPALIGC…PCSRIAHIER (77 aa)) are catalytic subdomain B. Residue histidine 397 coordinates Mn(2+). Substrate contacts are provided by arginine 400 and tyrosine 405. A Ricin B-type lectin domain is found at 484-614 (AYGVLQNSLK…KCSGQHWTIT (131 aa)).

It belongs to the glycosyltransferase 2 family. GalNAc-T subfamily. It depends on Mn(2+) as a cofactor.

It is found in the golgi apparatus membrane. It catalyses the reaction L-seryl-[protein] + UDP-N-acetyl-alpha-D-galactosamine = a 3-O-[N-acetyl-alpha-D-galactosaminyl]-L-seryl-[protein] + UDP + H(+). It carries out the reaction L-threonyl-[protein] + UDP-N-acetyl-alpha-D-galactosamine = a 3-O-[N-acetyl-alpha-D-galactosaminyl]-L-threonyl-[protein] + UDP + H(+). It functions in the pathway protein modification; protein glycosylation. In terms of biological role, catalyzes the initial reaction in O-linked oligosaccharide biosynthesis, the transfer of an N-acetyl-D-galactosamine (GalNAc) residue from UDP-GalNAc to a serine or threonine residue on the protein receptor. This is Polypeptide N-acetylgalactosaminyltransferase 18 (Galnt18) from Mus musculus (Mouse).